Consider the following 476-residue polypeptide: uncharacterized protein (476 aa).

Residues 7–39 form the LisH domain; it reads SRFYTNLLIANYLKHNGLEDTLAAFIRETALPL.

This is an uncharacterized protein from Saccharomyces cerevisiae (strain ATCC 204508 / S288c) (Baker's yeast).